We begin with the raw amino-acid sequence, 186 residues long: Probable chorismate pyruvate-lyase (186 aa).

R80, L118, and E170 together coordinate substrate.

It belongs to the UbiC family.

It localises to the cytoplasm. The enzyme catalyses chorismate = 4-hydroxybenzoate + pyruvate. It participates in cofactor biosynthesis; ubiquinone biosynthesis. Removes the pyruvyl group from chorismate, with concomitant aromatization of the ring, to provide 4-hydroxybenzoate (4HB) for the ubiquinone pathway. This Pseudomonas syringae pv. syringae (strain B728a) protein is Probable chorismate pyruvate-lyase.